The chain runs to 300 residues: GTPase Era (300 aa).

The region spanning 8 to 176 (RCGYVAIVGR…ERLVAGRLPQ (169 aa)) is the Era-type G domain. The G1 stretch occupies residues 16–23 (GRPNVGKS). 16–23 (GRPNVGKS) contacts GTP. The interval 42 to 46 (QTTRH) is G2. Residues 63-66 (DTPG) form a G3 region. GTP-binding positions include 63 to 67 (DTPGL) and 125 to 128 (NKAD). Residues 125-128 (NKAD) are G4. The segment at 155 to 157 (ISA) is G5. The 85-residue stretch at 199 to 283 (VREKIMRQLG…MLNLWVKVKG (85 aa)) folds into the KH type-2 domain.

This sequence belongs to the TRAFAC class TrmE-Era-EngA-EngB-Septin-like GTPase superfamily. Era GTPase family. As to quaternary structure, monomer.

Its subcellular location is the cytoplasm. The protein resides in the cell inner membrane. An essential GTPase that binds both GDP and GTP, with rapid nucleotide exchange. Plays a role in 16S rRNA processing and 30S ribosomal subunit biogenesis and possibly also in cell cycle regulation and energy metabolism. This Azotobacter vinelandii (strain DJ / ATCC BAA-1303) protein is GTPase Era.